The sequence spans 172 residues: Disulfide bond formation protein B (172 aa).

The Cytoplasmic portion of the chain corresponds to 1-11 (MNPFRWGFRAQ). Residues 12–28 (FLLGFLACAGLLAYAIY) form a helical membrane-spanning segment. The Periplasmic portion of the chain corresponds to 29–46 (VQLHLGLEPCPLCIFQRI). An intrachain disulfide couples C38 to C41. Residues 47-63 (AFATLALLFLLGALHGP) form a helical membrane-spanning segment. Residues 64-70 (RGAGGRK) lie on the Cytoplasmic side of the membrane. The chain crosses the membrane as a helical span at residues 71 to 88 (AYGVLAFIAAGVGMGIAA). The Periplasmic portion of the chain corresponds to 89 to 145 (RHVWVQIRPKDMMSSCGPPLSFLSETMGPFEVFRTVLTGTGDCGNIDWRFLGLSMPM). C104 and C131 are disulfide-bonded. The helical transmembrane segment at 146–164 (WSMVWFVGLALWALYAGFK) threads the bilayer. Residues 165 to 172 (HRGPRKLF) lie on the Cytoplasmic side of the membrane.

This sequence belongs to the DsbB family.

The protein resides in the cell inner membrane. Its function is as follows. Required for disulfide bond formation in some periplasmic proteins. Acts by oxidizing the DsbA protein. The protein is Disulfide bond formation protein B of Xanthomonas campestris pv. campestris (strain 8004).